The chain runs to 150 residues: Phosphoribosyl-AMP cyclohydrolase (150 aa).

Aspartate 92 is a Mg(2+) binding site. Cysteine 93 serves as a coordination point for Zn(2+). Aspartate 94 and aspartate 96 together coordinate Mg(2+). Zn(2+)-binding residues include cysteine 111 and cysteine 118.

This sequence belongs to the PRA-CH family. In terms of assembly, homodimer. It depends on Mg(2+) as a cofactor. Zn(2+) serves as cofactor.

It localises to the cytoplasm. The catalysed reaction is 1-(5-phospho-beta-D-ribosyl)-5'-AMP + H2O = 1-(5-phospho-beta-D-ribosyl)-5-[(5-phospho-beta-D-ribosylamino)methylideneamino]imidazole-4-carboxamide. It functions in the pathway amino-acid biosynthesis; L-histidine biosynthesis; L-histidine from 5-phospho-alpha-D-ribose 1-diphosphate: step 3/9. Its function is as follows. Catalyzes the hydrolysis of the adenine ring of phosphoribosyl-AMP. This Agrobacterium fabrum (strain C58 / ATCC 33970) (Agrobacterium tumefaciens (strain C58)) protein is Phosphoribosyl-AMP cyclohydrolase.